The primary structure comprises 339 residues: MQDTAIQEIQGAETLEALQAVKTKYVGKSGLVTKELGSLGKLPPEERKACGAEINVVRAAIQAALDEKESALKRAALDAKLASEAIDVTLPGLPLPAGGLHPISRVLDDLIGIYRQMGYAVIEGPEVEEEHYNFEALNVPWYHPARDLQDTFWLEDGRLLRTHTSPMQIRYMVDHEPPFKIVVRGKVYRYEATDATHEAMFHQLEGLVVGDGISMSDLKGTIAEMARGLYGASAKARFQPSYYPFVEPGADFAVYWENPRGESKWLELGGCGMVHPNVFKAVDDLREAAGKDRVYEGKTGFAFGLGLERIAMLKYGIPDIRYFYANDPRVIGQFRGELG.

Glu-247 provides a ligand contact to Mg(2+).

It belongs to the class-II aminoacyl-tRNA synthetase family. Phe-tRNA synthetase alpha subunit type 1 subfamily. In terms of assembly, tetramer of two alpha and two beta subunits. The cofactor is Mg(2+).

It is found in the cytoplasm. It carries out the reaction tRNA(Phe) + L-phenylalanine + ATP = L-phenylalanyl-tRNA(Phe) + AMP + diphosphate + H(+). The polypeptide is Phenylalanine--tRNA ligase alpha subunit (pheS) (Deinococcus radiodurans (strain ATCC 13939 / DSM 20539 / JCM 16871 / CCUG 27074 / LMG 4051 / NBRC 15346 / NCIMB 9279 / VKM B-1422 / R1)).